The sequence spans 186 residues: ADP-ribosylation factor-like protein 6 (186 aa).

Glycine 2 carries N-myristoyl glycine lipidation. GTP-binding positions include 24–31 (GLDNSGKT), threonine 50, 69–73 (DMSGQ), glycine 72, 130–133 (NKMD), and alanine 164. Residue threonine 50 coordinates Mg(2+).

It belongs to the small GTPase superfamily. Arf family. Interacts with SEC61B, ARL6IP1, ARL6IP2, ARL6IP3, ARL6IP4 ARL6IP5 and ARL6IP6. Interacts (GTP-bound form) with the BBSome a complex that contains BBS1, BBS2, BBS4, BBS5, BBS7, BBS8/TTC8, BBS9 and BBIP10. Interacts (GTP-free form) with IFT27.

The protein localises to the cell projection. Its subcellular location is the cilium membrane. It localises to the cytoplasm. It is found in the cytoskeleton. The protein resides in the cilium axoneme. The protein localises to the cilium basal body. In terms of biological role, involved in membrane protein trafficking at the base of the ciliary organelle. Mediates recruitment onto plasma membrane of the BBSome complex which would constitute a coat complex required for sorting of specific membrane proteins to the primary cilia. Together with the BBSome complex and LTZL1, controls SMO ciliary trafficking and contributes to the sonic hedgehog (SHH) pathway regulation. May regulate cilia assembly and disassembly and subsequent ciliary signaling events such as the Wnt signaling cascade. Isoform 2 may be required for proper retinal function and organization. This chain is ADP-ribosylation factor-like protein 6 (ARL6), found in Pongo abelii (Sumatran orangutan).